We begin with the raw amino-acid sequence, 715 residues long: Harpin secretion protein HrpI (715 aa).

7 consecutive transmembrane segments (helical) span residues 23–43 (GAAI…TGLI), 45–65 (VLIA…MYLP), 69–89 (AFST…ALSI), 115–135 (GNLA…FLVI), 203–223 (AIAG…IGVL), 241–261 (IGDG…AGMI), and 298–318 (MLGF…ISAI).

The protein belongs to the FHIPEP (flagella/HR/invasion proteins export pore) family.

It is found in the cell inner membrane. Involved in the secretion of harpin; a proteinaceous elicitor of the hypersensitivity response in plants. The polypeptide is Harpin secretion protein HrpI (hrpI) (Erwinia amylovora (Fire blight bacteria)).